The chain runs to 670 residues: Sodium, potassium, lithium and rubidium/H(+) antiporter (670 aa).

11 helical membrane-spanning segments follow: residues 5–27, 46–66, 83–103, 105–125, 156–176, 182–202, 228–248, 276–296, 314–334, 355–375, and 389–409; these read LVVL…IPFI, GLHF…PLLF, PILL…GYTI, WMIP…LSPT, ASGL…AFSL, SFVF…FLII, FVIY…VVAG, IILF…IPDV, YILV…LFFW, LLIS…FSIP, and LILF…TVVL.

The protein belongs to the monovalent cation:proton antiporter 1 (CPA1) transporter (TC 2.A.36) family. Nhak (TC 2.A.36.3.2) subfamily.

The protein resides in the cell membrane. Its function is as follows. Transporter involved in the efflux of sodium, potassium, lithium and rubidium. The polypeptide is Sodium, potassium, lithium and rubidium/H(+) antiporter (nhaK) (Bacillus subtilis (strain 168)).